The chain runs to 202 residues: ATP-dependent Clp protease proteolytic subunit (202 aa).

S106 functions as the Nucleophile in the catalytic mechanism. The active site involves H131.

This sequence belongs to the peptidase S14 family. In terms of assembly, fourteen ClpP subunits assemble into 2 heptameric rings which stack back to back to give a disk-like structure with a central cavity, resembling the structure of eukaryotic proteasomes.

Its subcellular location is the cytoplasm. It catalyses the reaction Hydrolysis of proteins to small peptides in the presence of ATP and magnesium. alpha-casein is the usual test substrate. In the absence of ATP, only oligopeptides shorter than five residues are hydrolyzed (such as succinyl-Leu-Tyr-|-NHMec, and Leu-Tyr-Leu-|-Tyr-Trp, in which cleavage of the -Tyr-|-Leu- and -Tyr-|-Trp bonds also occurs).. Functionally, cleaves peptides in various proteins in a process that requires ATP hydrolysis. Has a chymotrypsin-like activity. Plays a major role in the degradation of misfolded proteins. The protein is ATP-dependent Clp protease proteolytic subunit of Shewanella oneidensis (strain ATCC 700550 / JCM 31522 / CIP 106686 / LMG 19005 / NCIMB 14063 / MR-1).